The chain runs to 289 residues: MDFSKGHGTENDFVVLPDPDVRIDLSAPRVAALCDRRRGLGADGILRVAKAGALAGAGVLAELPDGTSEDDWFMDYRNADGSIAEMCGNGVRVFAHYLRAAGLESRDEFVVGSRAGGKPVIVHSADGAFGEVTVDMGVVRDLGTSAATIDGKVFNGIGIDVGNPHLACVDAHLTAASLSALDLTAAPGFDPGFFPHGVNVEILTRIDSGAVDMRVHERGVGETRSCGTGTVAAATAALRFDGADSGEVNVRIPGGQVTVAVSGGRATLRGPSVLVASGTLDDGWWNGLA.

Asn-11 and Asn-78 together coordinate substrate. The active-site Proton donor is the Cys-87. Substrate-binding positions include 88-89 (GN), Asn-163, Asn-199, and 217-218 (ER). The active-site Proton acceptor is Cys-226. Residue 227 to 228 (GT) coordinates substrate.

It belongs to the diaminopimelate epimerase family. Homodimer.

Its subcellular location is the cytoplasm. It catalyses the reaction (2S,6S)-2,6-diaminopimelate = meso-2,6-diaminopimelate. It participates in amino-acid biosynthesis; L-lysine biosynthesis via DAP pathway; DL-2,6-diaminopimelate from LL-2,6-diaminopimelate: step 1/1. Functionally, catalyzes the stereoinversion of LL-2,6-diaminopimelate (L,L-DAP) to meso-diaminopimelate (meso-DAP), a precursor of L-lysine and an essential component of the bacterial peptidoglycan. The protein is Diaminopimelate epimerase of Rhodococcus jostii (strain RHA1).